Consider the following 201-residue polypeptide: Glycerol-3-phosphate acyltransferase (201 aa).

A run of 5 helical transmembrane segments spans residues M10–L30, L60–A80, A86–F106, L116–V136, and A166–I186.

The protein belongs to the PlsY family. As to quaternary structure, probably interacts with PlsX.

The protein localises to the cell inner membrane. The catalysed reaction is an acyl phosphate + sn-glycerol 3-phosphate = a 1-acyl-sn-glycero-3-phosphate + phosphate. The protein operates within lipid metabolism; phospholipid metabolism. Catalyzes the transfer of an acyl group from acyl-phosphate (acyl-PO(4)) to glycerol-3-phosphate (G3P) to form lysophosphatidic acid (LPA). This enzyme utilizes acyl-phosphate as fatty acyl donor, but not acyl-CoA or acyl-ACP. This Brucella canis (strain ATCC 23365 / NCTC 10854 / RM-666) protein is Glycerol-3-phosphate acyltransferase.